An 838-amino-acid polypeptide reads, in one-letter code: Valine--tRNA ligase (838 aa).

Residues 46 to 56 (PNLTGTLHIGH) carry the 'HIGH' region motif. A 'KMSKS' region motif is present at residues 514 to 518 (KMSKS). ATP is bound at residue Lys517. A coiled-coil region spans residues 768 to 838 (VDNAANNLAH…HLIAKLTKAE (71 aa)).

This sequence belongs to the class-I aminoacyl-tRNA synthetase family. ValS type 1 subfamily. As to quaternary structure, monomer.

The protein localises to the cytoplasm. The catalysed reaction is tRNA(Val) + L-valine + ATP = L-valyl-tRNA(Val) + AMP + diphosphate. Functionally, catalyzes the attachment of valine to tRNA(Val). As ValRS can inadvertently accommodate and process structurally similar amino acids such as threonine, to avoid such errors, it has a 'posttransfer' editing activity that hydrolyzes mischarged Thr-tRNA(Val) in a tRNA-dependent manner. This Mycoplasma pneumoniae (strain ATCC 29342 / M129 / Subtype 1) (Mycoplasmoides pneumoniae) protein is Valine--tRNA ligase.